A 142-amino-acid chain; its full sequence is HTH-type transcriptional regulator LrpA1 (142 aa).

An HTH asnC-type domain is found at 1-72 (MSTESTEERI…GQSIAMVGID (72 aa)). A DNA-binding region (H-T-H motif) is located at residues 22–41 (YAAIAERADVSKPTVRKYID).

Functionally, transcription factor that regulates genes involved in amino acid metabolism. Represses the aspB3 gene, coding for an aspartate transaminase, in the presence of L-aspartate. Another target gene is the basal transcriptional regulator tfbB. Also binds its own promoter. This chain is HTH-type transcriptional regulator LrpA1 (lrpA1), found in Halobacterium salinarum (strain ATCC 29341 / DSM 671 / R1).